The chain runs to 227 residues: Fibrillarin-like rRNA/tRNA 2'-O-methyltransferase (227 aa).

S-adenosyl-L-methionine is bound by residues 86 to 87 (TT), 105 to 106 (EF), 130 to 131 (DA), and 150 to 153 (DVAQ).

This sequence belongs to the methyltransferase superfamily. Fibrillarin family. Interacts with nop5. Component of box C/D small ribonucleoprotein (sRNP) particles that contain rpl7ae, FlpA and nop5, plus a guide RNA.

In terms of biological role, involved in pre-rRNA and tRNA processing. Utilizes the methyl donor S-adenosyl-L-methionine to catalyze the site-specific 2'-hydroxyl methylation of ribose moieties in rRNA and tRNA. Site specificity is provided by a guide RNA that base pairs with the substrate. Methylation occurs at a characteristic distance from the sequence involved in base pairing with the guide RNA. This is Fibrillarin-like rRNA/tRNA 2'-O-methyltransferase from Pyrococcus horikoshii (strain ATCC 700860 / DSM 12428 / JCM 9974 / NBRC 100139 / OT-3).